Reading from the N-terminus, the 245-residue chain is MPYRKYREKKYEAKYREAFRAFQQKLGITFTNEKLLIQAFTHSSYVNEHRKKPHEDNERLEFLGDAVLELTVSQYLFQKYPTMSEGELTKLRAAIVCEPSLVRFANELSFGSLVLLGKGEEMTGGRERPALLADVFEAFIGALYLDQGLDTVWGFLKEIVYPKINEGAFSHVMDYKSQLQELIQRDGSGNIEYQILQEKGPAHNREFVSRVTLNSVALGLGSGKSKKEAEQQAAAEALRKLKEQS.

Residues 19-148 (FRAFQQKLGI…FIGALYLDQG (130 aa)) form the RNase III domain. Residue E61 participates in Mg(2+) binding. The active site involves D65. Mg(2+) is bound by residues D134 and E137. E137 is an active-site residue. The DRBM domain maps to 174 to 243 (DYKSQLQELI…AAEALRKLKE (70 aa)).

Belongs to the ribonuclease III family. Homodimer. Requires Mg(2+) as cofactor.

The protein resides in the cytoplasm. It catalyses the reaction Endonucleolytic cleavage to 5'-phosphomonoester.. Its function is as follows. Digests double-stranded RNA. Involved in the processing of primary rRNA transcript to yield the immediate precursors to the large and small rRNAs (23S and 16S). Processes some mRNAs, and tRNAs when they are encoded in the rRNA operon. Processes pre-crRNA and tracrRNA of type II CRISPR loci if present in the organism. This is Ribonuclease 3 from Bacillus cytotoxicus (strain DSM 22905 / CIP 110041 / 391-98 / NVH 391-98).